Here is a 312-residue protein sequence, read N- to C-terminus: D-alanine--D-alanine ligase (312 aa).

One can recognise an ATP-grasp domain in the interval 103–303 (KQQLVPHGIR…YADLVQAIVD (201 aa)). 130–186 (MPRPYVLKPVNEGSSVGVAIIKERDNHGVPIHRDSHGPWQTFATLLAEPFIRGRELT) contacts ATP. Mg(2+) is bound by residues D254, E270, and N272.

The protein belongs to the D-alanine--D-alanine ligase family. It depends on Mg(2+) as a cofactor. Mn(2+) is required as a cofactor.

The protein resides in the cytoplasm. The enzyme catalyses 2 D-alanine + ATP = D-alanyl-D-alanine + ADP + phosphate + H(+). It functions in the pathway cell wall biogenesis; peptidoglycan biosynthesis. Cell wall formation. The polypeptide is D-alanine--D-alanine ligase (Rhizorhabdus wittichii (strain DSM 6014 / CCUG 31198 / JCM 15750 / NBRC 105917 / EY 4224 / RW1) (Sphingomonas wittichii)).